The primary structure comprises 284 residues: tRNA pseudouridine synthase A (284 aa).

Asp-52 functions as the Nucleophile in the catalytic mechanism. Tyr-149 contributes to the substrate binding site.

The protein belongs to the tRNA pseudouridine synthase TruA family. Homodimer.

The enzyme catalyses uridine(38/39/40) in tRNA = pseudouridine(38/39/40) in tRNA. Its function is as follows. Formation of pseudouridine at positions 38, 39 and 40 in the anticodon stem and loop of transfer RNAs. The protein is tRNA pseudouridine synthase A of Orientia tsutsugamushi (strain Boryong) (Rickettsia tsutsugamushi).